A 1031-amino-acid chain; its full sequence is LRR receptor-like serine/threonine-protein kinase EFR (1031 aa).

Residues 1 to 24 (MKLSFSLVFNALTLLLQVCIFAQA) form the signal peptide. Residues 25 to 653 (RFSNETDMQA…LSVRKKVVSG (629 aa)) lie on the Extracellular side of the membrane. N-linked (GlcNAc...) asparagine glycans are attached at residues Asn28, Asn55, and Asn95. LRR repeat units follow at residues 98–120 (FLRLLNLADNSFGSTIPQKVGRL), 122–144 (RLQYLNMSYNLLEGRIPSSLSNC), 146–168 (RLSTVDLSSNHLGHGVPSELGSL), 170–193 (KLAILDLSKNNLTGNFPASLGNLT), 194–216 (SLQKLDFAYNQMRGEIPDEVARL), 218–240 (QMVFFQIALNSFSGGFPPALYNI), 242–264 (SLESLSLADNSFSGNLRADFGYL), 267–289 (NLRRLLLGTNQFTGAIPKTLANI), 291–312 (SLERFDISSNYLSGSIPLSFGK), and 315–335 (NLWWLGIRNNSLGNNSSSGLE). Residues Asn127 and Asn143 are each glycosylated (N-linked (GlcNAc...) asparagine). N-linked (GlcNAc...) asparagine glycosylation is found at Asn180 and Asn191. A glycan (N-linked (GlcNAc...) asparagine) is linked at Asn239. N-linked (GlcNAc...) asparagine glycosylation is present at Asn288. 4 N-linked (GlcNAc...) asparagine glycosylation sites follow: Asn323, Asn329, Asn342, and Asn366. LRR repeat units follow at residues 345–368 (QLEYLDVGYNRLGGELPASIANLS), 370–392 (TLTSLFLGQNLISGTIPHDIGNL), 394–416 (SLQELSLETNMLSGELPVSFGKL), 418–440 (NLQVVDLYSNAISGEIPSYFGNM), 442–464 (RLQKLHLNSNSFHGRIPQSLGRC), 466–487 (YLLDLWMDTNRLNGTIPQEILQ), 490–512 (SLAYIDLSNNFLTGHFPEEVGKL), 514–536 (LLVGLGASYNKLSGKMPQAIGGC), 538–560 (SMEFLFMQGNSFDGAIPDISRLV), 561–584 (SLKNVDFSNNNLSGRIPRYLASLP), and 585–597 (SLRNLNLSMNKFE). Asn439 is a glycosylation site (N-linked (GlcNAc...) asparagine). The N-linked (GlcNAc...) asparagine glycan is linked to Asn478. N-linked (GlcNAc...) asparagine glycosylation is found at Asn571, Asn590, and Asn608. Residues 654–674 (ICIGIASLLLIIIVASLCWFM) traverse the membrane as a helical segment. Residues 675-1031 (KRKKKNNASD…WMLNTDMHTM (357 aa)) are Cytoplasmic-facing. A Phosphothreonine modification is found at Thr709. In terms of domain architecture, Protein kinase spans 712-1001 (FSSTNLIGSG…ELISIRSKFF (290 aa)). ATP is bound by residues 718 to 726 (IGSGNFGNV) and Lys741. Phosphotyrosine occurs at positions 791 and 836. Asp849 functions as the Proton acceptor in the catalytic mechanism. Position 897 is a phosphotyrosine (Tyr897). Over residues 1005–1020 (TTITESPRDAPQSSPQ) the composition is skewed to polar residues. The tract at residues 1005–1031 (TTITESPRDAPQSSPQEWMLNTDMHTM) is disordered.

The protein belongs to the protein kinase superfamily. Ser/Thr protein kinase family. As to quaternary structure, binds to Pseudomonas syringae AvrPto1 and (via the kinase and cytoplasmic domains) to hopD2. Interacts with SERK3/BAK1, SERK4/BKK1, SERK1 and SERK2 in a specific ligand-induced manner. Binds to IOS1. Binds to BIK1 in the absence of pathogen elicitor; dissociates upon pathogen-associated molecular pattern (PAMP)-triggered activation. Autophosphorylated after elicitation with elfl18. Autophosphorylation is inhibited by the binding with avrPto1. Phosphorylation at T-836 is required for immune signaling. Post-translationally, polyubiquitinated at the kinase domain mediated by P.syringae AvrPtoB.

Its subcellular location is the cell membrane. It localises to the endomembrane system. The catalysed reaction is L-seryl-[protein] + ATP = O-phospho-L-seryl-[protein] + ADP + H(+). The enzyme catalyses L-threonyl-[protein] + ATP = O-phospho-L-threonyl-[protein] + ADP + H(+). Its function is as follows. Constitutes the pattern-recognition receptor (PPR) that determines the specific perception of elongation factor Tu (EF-Tu), a potent elicitor of the defense response to pathogen-associated molecular patterns (PAMPs); phosphorylates BIK1 upon elicitation to regulate immune responses such as defense hormone expression (e.g. jasmonic acid (JA) and salicylic acid (SA)). Reduces transformation by Rhizobium radiobacter probably by inducing plant defense during the interaction. Binding to the effector AvrPto1 from P.syringae blocks the downstream plant immune response while interaction with hopD2 decreases the phosphorylation level of EFR upon elf18 treatment. Specific endoplasmic reticulum quality control components (ERD2B, CRT3, UGGT and STT3A) are required for the biogenesis of EFR. This chain is LRR receptor-like serine/threonine-protein kinase EFR, found in Arabidopsis thaliana (Mouse-ear cress).